The sequence spans 132 residues: Intraflagellar transport protein 20 homolog B (132 aa).

Positions 87-112 form a coiled coil; that stretch reads EAQQQQLYALIAEKKMQLERYRIEYD.

It localises to the golgi apparatus. Its subcellular location is the cis-Golgi network. The protein resides in the cytoplasm. It is found in the cytoskeleton. The protein localises to the microtubule organizing center. It localises to the centrosome. Its subcellular location is the centriole. The protein resides in the cell projection. It is found in the cilium. Functionally, involved in ciliary process assembly. May play a role in the trafficking of ciliary membrane proteins from the Golgi complex to the cilium. Regulates the platelet-derived growth factor receptor-alpha (PDGFRA) signaling pathway. Plays an important role in spermatogenesis, particularly spermiogenesis, when germ cells form flagella. The sequence is that of Intraflagellar transport protein 20 homolog B (ift20-b) from Xenopus laevis (African clawed frog).